Here is a 259-residue protein sequence, read N- to C-terminus: Oxidase ustYb (259 aa).

A helical membrane pass occupies residues 36–56 (IIYTSLAFVGFIEILFFGIFF). 2 N-linked (GlcNAc...) asparagine glycosylation sites follow: asparagine 102 and asparagine 122. 2 consecutive short sequence motifs (HXXHC) follow at residues 147-151 (HQLHC) and 197-201 (HVDHC).

It belongs to the ustYa family.

The protein resides in the membrane. The protein operates within mycotoxin biosynthesis. Oxidase; part of the gene cluster that mediates the biosynthesis of the secondary metabolite ustiloxin B, an antimitotic tetrapeptide. First, ustA is processed by the subtilisin-like endoprotease Kex2 that is outside the ustiloxin B gene cluster, at the C-terminal side of Arg-Lys, after transfer to Golgi apparatus through the endoplasmic reticulum (ER). Cleavage by KEX2 generates 16 peptides YAIG-I to YAIG-XVI. To process the precursor peptide further, at least two peptidases are necessary to cleave the N-terminal and C-terminal sides of the Tyr-Ala-Ile-Gly core peptide which serves as backbone for the synthesis of ustiloxin B, through cyclization and modification of the tyrosine with a non-protein coding amino acid, norvaline. One of the two peptidases must be the serine peptidase ustP; and the other pepdidase is probably ustH. Macrocyclization of the core peptide derived from ustA requires the tyrosinase ustQ, as well as the homologous oxidases ustYa and ustYb, and leads to the production of the first cyclization product N-desmethylustiloxin F. For the formation of N-desmethylustiloxin F, three oxidation steps are required, hydroxylation at the benzylic position, hydroxylation at either the aromatic ring of Tyr or beta-position of Ile, and oxidative cyclization. UstQ may catalyze the oxidation of a phenol moiety, whereas the ustYa and ustYb are most likely responsible for the remaining two-step oxidations. N-desmethylustiloxin F is then methylated by ustM to yield ustiloxin F which in turn substrate of the cytochrome P450 monooxygenase ustC which catalyzes the formation of S-deoxyustiloxin H. The flavoprotein monooxygenases ustF1 and ustF2 then participate in the modification of the side chain of S-deoxyustiloxin H, leading to the synthesis of an oxime intermediate, via ustiloxin H. Finally, carboxylative dehydration performed by the cysteine desulfurase-like protein ustD yields ustiloxin B. In Aspergillus flavus (strain ATCC 200026 / FGSC A1120 / IAM 13836 / NRRL 3357 / JCM 12722 / SRRC 167), this protein is Oxidase ustYb.